The chain runs to 158 residues: Transcription elongation factor GreA (158 aa).

Belongs to the GreA/GreB family.

In terms of biological role, necessary for efficient RNA polymerase transcription elongation past template-encoded arresting sites. The arresting sites in DNA have the property of trapping a certain fraction of elongating RNA polymerases that pass through, resulting in locked ternary complexes. Cleavage of the nascent transcript by cleavage factors such as GreA or GreB allows the resumption of elongation from the new 3'terminus. GreA releases sequences of 2 to 3 nucleotides. In Pelobacter propionicus (strain DSM 2379 / NBRC 103807 / OttBd1), this protein is Transcription elongation factor GreA.